Here is a 180-residue protein sequence, read N- to C-terminus: Cuticle protein 3 (180 aa).

A signal peptide spans 1–16 (MMKLIVLAAFIGVCAG). The 64-residue stretch at 58-121 (EQGFRYAYET…PQGAHFPTPP (64 aa)) folds into the Chitin-binding type R&amp;R domain.

This Lonomia obliqua (Moth) protein is Cuticle protein 3.